A 381-amino-acid polypeptide reads, in one-letter code: Creatine kinase M-type (381 aa).

A Phosphagen kinase N-terminal domain is found at 11–98; that stretch reads KLNYKPEEEY…FDPIISDRHG (88 aa). In terms of domain architecture, Phosphagen kinase C-terminal spans 125–367; sequence YVLSSRVRTG…KLMVEMEKKL (243 aa). An ATP-binding site is contributed by 128-132; that stretch reads SSRVR. Residue serine 164 is modified to Phosphoserine. Threonine 166 bears the Phosphothreonine mark. At serine 178 the chain carries Phosphoserine. Threonine 180 is subject to Phosphothreonine. ATP is bound at residue histidine 191. Serine 199 is modified (phosphoserine). Residues arginine 236 and arginine 292 each coordinate ATP. 2 positions are modified to phosphothreonine: threonine 313 and threonine 322. Residues 320–325 and aspartate 335 contribute to the ATP site; that span reads RGTGGV. At serine 372 the chain carries Phosphoserine.

The protein belongs to the ATP:guanido phosphotransferase family. As to quaternary structure, dimer of identical or non-identical chains, which can be either B (brain type) or M (muscle type). With MM being the major form in skeletal muscle and myocardium, MB existing in myocardium, and BB existing in many tissues, especially brain.

It localises to the cytoplasm. The catalysed reaction is creatine + ATP = N-phosphocreatine + ADP + H(+). Functionally, reversibly catalyzes the transfer of phosphate between ATP and various phosphogens (e.g. creatine phosphate). Creatine kinase isoenzymes play a central role in energy transduction in tissues with large, fluctuating energy demands, such as skeletal muscle, heart, brain and spermatozoa. This chain is Creatine kinase M-type (CKM), found in Homo sapiens (Human).